Consider the following 560-residue polypeptide: Dimethylaniline monooxygenase [N-oxide-forming] 4 (560 aa).

FAD is bound by residues 9-13, E32, and 40-41; these read GAGVS and LW. NADP(+) contacts are provided by residues 60 to 61 and 195 to 198; these read TN and TGGD. Residues 510–530 traverse the membrane as a helical segment; it reads LSHYLIAWGAPVLLVSLLLIY.

Belongs to the FMO family. The cofactor is FAD.

The protein localises to the microsome membrane. The protein resides in the endoplasmic reticulum membrane. It catalyses the reaction N,N-dimethylaniline + NADPH + O2 + H(+) = N,N-dimethylaniline N-oxide + NADP(+) + H2O. Functionally, this protein is involved in the oxidative metabolism of a variety of xenobiotics such as drugs and pesticides. This is Dimethylaniline monooxygenase [N-oxide-forming] 4 (Fmo4) from Mus musculus (Mouse).